A 123-amino-acid polypeptide reads, in one-letter code: Putative iron-sulfur cluster insertion protein ErpA (123 aa).

Positions 51, 115, and 117 each coordinate iron-sulfur cluster.

It belongs to the HesB/IscA family. In terms of assembly, homodimer. It depends on iron-sulfur cluster as a cofactor.

Required for insertion of 4Fe-4S clusters. This Bordetella avium (strain 197N) protein is Putative iron-sulfur cluster insertion protein ErpA.